The sequence spans 99 residues: Ragulator complex protein LAMTOR4 (99 aa).

M1 carries the post-translational modification N-acetylmethionine. T2 is subject to N-acetylthreonine; in Ragulator complex protein LAMTOR4, N-terminally processed. Position 67 is a phosphoserine (S67).

The protein belongs to the LAMTOR4 family. In terms of assembly, part of the Ragulator complex composed of LAMTOR1, LAMTOR2, LAMTOR3, LAMTOR4 and LAMTOR5. LAMTOR4 and LAMTOR5 form a heterodimer that interacts, through LAMTOR1, with a LAMTOR2, LAMTOR3 heterodimer. The Ragulator complex interacts with both the mTORC1 complex and heterodimers constituted of the Rag GTPases RagA/RRAGA, RagB/RRAGB, RagC/RRAGC and RagD/RRAGD; regulated by amino acid availability. The Ragulator complex interacts with SLC38A9; the probable amino acid sensor. Component of the lysosomal folliculin complex (LFC), composed of FLCN, FNIP1 (or FNIP2), RagA/RRAGA or RagB/RRAGB GDP-bound, RagC/RRAGC or RagD/RRAGD GTP-bound, and Ragulator. In terms of processing, phosphorylation at Ser-67 by PKA inhibits Ragulator complex assembly.

Its subcellular location is the lysosome. Functionally, as part of the Ragulator complex it is involved in amino acid sensing and activation of mTORC1, a signaling complex promoting cell growth in response to growth factors, energy levels, and amino acids. Activated by amino acids through a mechanism involving the lysosomal V-ATPase, the Ragulator plays a dual role for the small GTPases Rag (RagA/RRAGA, RagB/RRAGB, RagC/RRAGC and/or RagD/RRAGD): it (1) acts as a guanine nucleotide exchange factor (GEF), activating the small GTPases Rag and (2) mediates recruitment of Rag GTPases to the lysosome membrane. Activated Ragulator and Rag GTPases function as a scaffold recruiting mTORC1 to lysosomes where it is in turn activated. The sequence is that of Ragulator complex protein LAMTOR4 (LAMTOR4) from Bos taurus (Bovine).